Consider the following 425-residue polypeptide: Tol-Pal system protein TolB (425 aa).

The first 22 residues, M1–A22, serve as a signal peptide directing secretion.

It belongs to the TolB family. The Tol-Pal system is composed of five core proteins: the inner membrane proteins TolA, TolQ and TolR, the periplasmic protein TolB and the outer membrane protein Pal. They form a network linking the inner and outer membranes and the peptidoglycan layer.

It localises to the periplasm. Functionally, part of the Tol-Pal system, which plays a role in outer membrane invagination during cell division and is important for maintaining outer membrane integrity. This Nitrosomonas europaea (strain ATCC 19718 / CIP 103999 / KCTC 2705 / NBRC 14298) protein is Tol-Pal system protein TolB.